A 320-amino-acid chain; its full sequence is MDRPGALDRLRTAVEAFSTAHLGAVERWCVALSGGPDSLALTAVAARLRPTTAVIVDHGLQPDSAAVAQTARAQAIALGCVAAQVISVHVDGEGGLEAAARRARYAALAAHRDGPVLLGHTLDDQAETVLLGLGRGSGVRSIAGMRPHDPPWCRPLLGQRRAVTHAACAELGLTAWQDPHNSDRRFARARLRAEVLPLLEEVLGGGVVEALARTATALREDNELLDALAERALPAARAGAGLQVAALAGLDAPVRRRVIRAWLLAGGATGLTDKQIRGVDNLVTAWRGQGAVAVGSSLPGERLFAGRRDGVLTLWREPVR.

ATP is bound at residue Ser-33 to Ser-38.

Belongs to the tRNA(Ile)-lysidine synthase family.

The protein localises to the cytoplasm. The enzyme catalyses cytidine(34) in tRNA(Ile2) + L-lysine + ATP = lysidine(34) in tRNA(Ile2) + AMP + diphosphate + H(+). Functionally, ligates lysine onto the cytidine present at position 34 of the AUA codon-specific tRNA(Ile) that contains the anticodon CAU, in an ATP-dependent manner. Cytidine is converted to lysidine, thus changing the amino acid specificity of the tRNA from methionine to isoleucine. This Mycolicibacterium paratuberculosis (strain ATCC BAA-968 / K-10) (Mycobacterium paratuberculosis) protein is tRNA(Ile)-lysidine synthase.